A 458-amino-acid chain; its full sequence is Putative long chain fatty acid-CoA ligase VraA (458 aa).

The protein belongs to the ATP-dependent AMP-binding enzyme family.

In Staphylococcus aureus (strain MRSA252), this protein is Putative long chain fatty acid-CoA ligase VraA (vraA).